A 113-amino-acid polypeptide reads, in one-letter code: Endoribonuclease SymE (113 aa).

The SpoVT-AbrB domain maps to 29–74 (SRYPDYSRIPAITLKGQWLEAAGFATGTAIDVKVMEGCIVLTAQPP).

Belongs to the SymE family.

The protein localises to the cytoplasm. In terms of biological role, involved in the degradation and recycling of damaged RNA. It is itself a target for degradation by the ATP-dependent protease Lon. The polypeptide is Endoribonuclease SymE (Escherichia coli O1:K1 / APEC).